Consider the following 121-residue polypeptide: Large ribosomal subunit protein bL12 (121 aa).

Belongs to the bacterial ribosomal protein bL12 family. As to quaternary structure, homodimer. Part of the ribosomal stalk of the 50S ribosomal subunit. Forms a multimeric L10(L12)X complex, where L10 forms an elongated spine to which 2 to 4 L12 dimers bind in a sequential fashion. Binds GTP-bound translation factors.

Functionally, forms part of the ribosomal stalk which helps the ribosome interact with GTP-bound translation factors. Is thus essential for accurate translation. The chain is Large ribosomal subunit protein bL12 from Pectobacterium atrosepticum (strain SCRI 1043 / ATCC BAA-672) (Erwinia carotovora subsp. atroseptica).